The following is a 241-amino-acid chain: Agamous-like MADS-box protein AGL9 homolog (241 aa).

Residues 3 to 57 enclose the MADS-box domain; it reads RGRVELKRIENKINRQVTFAKRRNGLLKKAYELSVLCDAEVALIIFSNRGKLYEF. Residues 89-179 form the K-box domain; sequence EISSQQEYLK…KQRLMEGSTL (91 aa).

Its subcellular location is the nucleus. Probable transcription factor. This is Agamous-like MADS-box protein AGL9 homolog (FBP2) from Petunia hybrida (Petunia).